A 67-amino-acid polypeptide reads, in one-letter code: Beta-defensin 103A (67 aa).

The signal sequence occupies residues 1–22 (MRIHFLLFALLFLFLMPVPGNG). 3 disulfide bridges follow: Cys-33–Cys-62, Cys-40–Cys-55, and Cys-45–Cys-63.

This sequence belongs to the beta-defensin family.

The protein localises to the secreted. Its function is as follows. Exhibits antimicrobial activity against Gram-positive and Gram-negative bacteria. The protein is Beta-defensin 103A (DEFB103A) of Equus caballus (Horse).